Here is a 101-residue protein sequence, read N- to C-terminus: Co-chaperonin GroES 1 (101 aa).

Belongs to the GroES chaperonin family. In terms of assembly, heptamer of 7 subunits arranged in a ring. Interacts with the chaperonin GroEL.

It is found in the cytoplasm. Functionally, together with the chaperonin GroEL, plays an essential role in assisting protein folding. The GroEL-GroES system forms a nano-cage that allows encapsulation of the non-native substrate proteins and provides a physical environment optimized to promote and accelerate protein folding. GroES binds to the apical surface of the GroEL ring, thereby capping the opening of the GroEL channel. The polypeptide is Co-chaperonin GroES 1 (Rhodopirellula baltica (strain DSM 10527 / NCIMB 13988 / SH1)).